Consider the following 25-residue polypeptide: Unknown protein 4 (25 aa).

A compositionally biased stretch (basic and acidic residues) spans 1 to 10 (IEHNAEEIRK). Residues 1 to 25 (IEHNAEEIRKTAIRTAVQNTAQQTK) are disordered. Positions 16–25 (AVQNTAQQTK) are enriched in polar residues.

The chain is Unknown protein 4 from Lonomia obliqua (Moth).